We begin with the raw amino-acid sequence, 600 residues long: Aspartate--tRNA(Asp/Asn) ligase (600 aa).

Glu174 is an L-aspartate binding site. An aspartate region spans residues 198–201 (QLFK). Arg220 provides a ligand contact to L-aspartate. ATP-binding positions include 220–222 (RDE) and Gln229. His457 provides a ligand contact to L-aspartate. ATP is bound at residue Glu491. Arg498 is a binding site for L-aspartate. Residue 543–546 (GLDR) participates in ATP binding.

This sequence belongs to the class-II aminoacyl-tRNA synthetase family. Type 1 subfamily. Homodimer.

The protein localises to the cytoplasm. It carries out the reaction tRNA(Asx) + L-aspartate + ATP = L-aspartyl-tRNA(Asx) + AMP + diphosphate. In terms of biological role, aspartyl-tRNA synthetase with relaxed tRNA specificity since it is able to aspartylate not only its cognate tRNA(Asp) but also tRNA(Asn). Reaction proceeds in two steps: L-aspartate is first activated by ATP to form Asp-AMP and then transferred to the acceptor end of tRNA(Asp/Asn). This Burkholderia pseudomallei (strain 668) protein is Aspartate--tRNA(Asp/Asn) ligase.